The primary structure comprises 238 residues: ATP-dependent dethiobiotin synthetase BioD (238 aa).

12–17 (EVGKTV) contributes to the ATP binding site. Residue T16 participates in Mg(2+) binding. Residue K37 is part of the active site. T41 is a binding site for substrate. Residues D50, 109–112 (EGAG), 170–171 (GS), and 200–202 (PAG) each bind ATP. The Mg(2+) site is built by D50 and E109.

Belongs to the dethiobiotin synthetase family. Homodimer. Mg(2+) is required as a cofactor.

It is found in the cytoplasm. The catalysed reaction is (7R,8S)-7,8-diammoniononanoate + CO2 + ATP = (4R,5S)-dethiobiotin + ADP + phosphate + 3 H(+). The protein operates within cofactor biosynthesis; biotin biosynthesis; biotin from 7,8-diaminononanoate: step 1/2. In terms of biological role, catalyzes a mechanistically unusual reaction, the ATP-dependent insertion of CO2 between the N7 and N8 nitrogen atoms of 7,8-diaminopelargonic acid (DAPA, also called 7,8-diammoniononanoate) to form a ureido ring. The sequence is that of ATP-dependent dethiobiotin synthetase BioD from Parafrankia sp. (strain EAN1pec).